We begin with the raw amino-acid sequence, 339 residues long: Transcription factor IIIA (339 aa).

C2H2-type zinc fingers lie at residues 12–36, 42–66, 72–97, 104–128, 134–158, 161–187, 190–212, 219–244, and 250–274; these read FICS…LCKH, FPCT…VLSH, CKCE…KRAH, YVCY…QYIH, FKCS…EKTH, YPCR…AELH, VTCS…KKIH, YRCP…LTFH, and FVCE…FNTH. Residues 271 to 339 form a disordered region; the sequence is FNTHDPEKKK…LPVLENLTLK (69 aa). Basic residues predominate over residues 299 to 309; it reads KPKKSKKKKKP. The span at 311–323 shows a compositional bias: polar residues; sequence QTPAMESQEQQPD.

Its subcellular location is the nucleus. Involved in ribosomal large subunit biogenesis. Interacts with the internal control region (ICR) of approximately 50 bases within the 5S RNA genes, is required for correct transcription of these genes by RNA polymerase III. Also binds the transcribed 5S RNA's. The chain is Transcription factor IIIA (gtf3a) from Anaxyrus americanus (American toad).